Consider the following 752-residue polypeptide: Peptidyl-prolyl cis-trans isomerase G (752 aa).

Positions 11-176 (FFDIAINNQP…AEVRILSCGE (166 aa)) constitute a PPIase cyclophilin-type domain. Basic residues predominate over residues 182–193 (KVKKEEKKRHKS). The segment at 182–752 (KVKKEEKKRH…SPGTDEDKSG (571 aa)) is disordered. Positions 194–214 (SSSSSSSDSDSSSDSQSSSES) are enriched in low complexity. The segment covering 226–251 (RKRKKKHRKNSRKHKKEKKKRKKSKK) has biased composition (basic residues). Phosphoserine occurs at positions 252, 254, 255, 257, and 288. The span at 290–308 (PKADDKERKNREREREREC) shows a compositional bias: basic and acidic residues. At S313 the chain carries Phosphoserine. Residues 327 to 345 (SGRKIKGRGPRRYRTPSRS) are compositionally biased toward basic residues. 2 stretches are compositionally biased toward basic and acidic residues: residues 346–366 (RSRD…EMQR) and 377–447 (RWIK…DKYN). Position 354 is a phosphoserine (S354). T356 carries the phosphothreonine modification. S384 bears the Phosphoserine mark. Residue K390 forms a Glycyl lysine isopeptide (Lys-Gly) (interchain with G-Cter in SUMO2) linkage. A phosphoserine mark is found at S395, S411, and S413. Residues 448 to 461 (KNKVKKRGKSKSRS) show a composition bias toward basic residues. Basic and acidic residues-rich tracts occupy residues 462 to 552 (KSKE…DLTK) and 577 to 598 (RSHD…QEYR). Residues 599-625 (RRGRSRSRDRRTPGRSRSKDRRRRRRD) are compositionally biased toward basic residues. The span at 626 to 684 (SRSSEREESQSRNKDKYRSQESKSSHRKENSEGEKRTYSKSRDHNSSSNNREKKADREQ) shows a compositional bias: basic and acidic residues. Phosphoserine is present on residues S685 and S688. Polar residues predominate over residues 685–705 (SPVSKTKQSSQDNEVKSSTLK). Residue K691 forms a Glycyl lysine isopeptide (Lys-Gly) (interchain with G-Cter in SUMO2) linkage. Residues S694, S742, and S743 each carry the phosphoserine modification. The span at 706–752 (NQEDEKTRSPVEKENQKSKGQENDHVHDKNKKCDHESSPGTDEDKSG) shows a compositional bias: basic and acidic residues. The residue at position 746 (T746) is a Phosphothreonine. The residue at position 751 (S751) is a Phosphoserine.

In terms of assembly, interacts with CLK1, PNN and with the phosphorylated C-terminal domain of RNA polymerase II.

It localises to the nucleus matrix. It is found in the nucleus speckle. It carries out the reaction [protein]-peptidylproline (omega=180) = [protein]-peptidylproline (omega=0). Its activity is regulated as follows. Inhibited by cyclosporin A (CsA). In terms of biological role, PPIase that catalyzes the cis-trans isomerization of proline imidic peptide bonds in oligopeptides and may therefore assist protein folding. May be implicated in the folding, transport, and assembly of proteins. May play an important role in the regulation of pre-mRNA splicing. The polypeptide is Peptidyl-prolyl cis-trans isomerase G (Ppig) (Mus musculus (Mouse)).